The sequence spans 286 residues: Glycine--tRNA ligase alpha subunit (286 aa).

Belongs to the class-II aminoacyl-tRNA synthetase family. As to quaternary structure, tetramer of two alpha and two beta subunits.

The protein resides in the cytoplasm. The catalysed reaction is tRNA(Gly) + glycine + ATP = glycyl-tRNA(Gly) + AMP + diphosphate. The protein is Glycine--tRNA ligase alpha subunit of Thermotoga neapolitana (strain ATCC 49049 / DSM 4359 / NBRC 107923 / NS-E).